A 1059-amino-acid polypeptide reads, in one-letter code: Translation initiation factor IF-2 (1059 aa).

Polar residues-rich tracts occupy residues 55–75 (LPHSPSLSAAPEKSNSQNQDS) and 107–126 (KINNNLVTTPPNTSVLNNQV). 3 disordered regions span residues 55–81 (LPHSPSLSAAPEKSNSQNQDSGIGYNE), 93–394 (PKPL…RLRL), and 418–468 (SLSL…QSAE). Positions 178–187 (DSNEKSKVEV) are enriched in basic and acidic residues. Over residues 202–211 (LNRNLRNTGV) the composition is skewed to polar residues. Positions 216–229 (QKNKKPKQEGKKRK) are enriched in basic residues. Composition is skewed to basic and acidic residues over residues 230–252 (DKEEKPFEKPAIVSKKENKDTSI) and 259–273 (SKKENKDTFQNRESV). Polar residues predominate over residues 274–284 (KTSASDTSSQL). 2 stretches are compositionally biased toward basic and acidic residues: residues 291-300 (KPTVKLKQEQ) and 359-368 (LTKDKKVSKW). Low complexity predominate over residues 452-463 (SHESVQSESNEQ). One can recognise a tr-type G domain in the interval 556-733 (RRPPVVTIMG…EVEDLQANPE (178 aa)). The tract at residues 565-572 (GHVDHGKT) is G1. Residue 565 to 572 (GHVDHGKT) coordinates GTP. Positions 590 to 594 (GITQH) are G2. The tract at residues 615–618 (DTPG) is G3. GTP-binding positions include 615 to 619 (DTPGH) and 669 to 672 (NKID). The tract at residues 669-672 (NKID) is G4. The interval 705 to 707 (SAI) is G5.

It belongs to the TRAFAC class translation factor GTPase superfamily. Classic translation factor GTPase family. IF-2 subfamily.

The protein localises to the cytoplasm. In terms of biological role, one of the essential components for the initiation of protein synthesis. Protects formylmethionyl-tRNA from spontaneous hydrolysis and promotes its binding to the 30S ribosomal subunits. Also involved in the hydrolysis of GTP during the formation of the 70S ribosomal complex. This is Translation initiation factor IF-2 from Trichodesmium erythraeum (strain IMS101).